A 340-amino-acid chain; its full sequence is Phosphoribosylformylglycinamidine cyclo-ligase (340 aa).

Belongs to the AIR synthase family.

It is found in the cytoplasm. The enzyme catalyses 2-formamido-N(1)-(5-O-phospho-beta-D-ribosyl)acetamidine + ATP = 5-amino-1-(5-phospho-beta-D-ribosyl)imidazole + ADP + phosphate + H(+). Its pathway is purine metabolism; IMP biosynthesis via de novo pathway; 5-amino-1-(5-phospho-D-ribosyl)imidazole from N(2)-formyl-N(1)-(5-phospho-D-ribosyl)glycinamide: step 2/2. The polypeptide is Phosphoribosylformylglycinamidine cyclo-ligase (Streptococcus gordonii (strain Challis / ATCC 35105 / BCRC 15272 / CH1 / DL1 / V288)).